A 775-amino-acid polypeptide reads, in one-letter code: Glutamine--tRNA ligase (775 aa).

Position 2 is an N-acetylalanine (alanine 2). A Phosphoserine modification is found at serine 70. Residues 271 to 273 (EPN) and 277 to 283 (HIGHAKA) each bind ATP. Position 303 (aspartate 303) interacts with L-glutamine. N6-acetyllysine is present on lysine 309. L-glutamine is bound at residue tyrosine 438. Residues threonine 457, 486 to 487 (RL), and 494 to 496 (VSK) each bind ATP. Position 495 is a phosphoserine (serine 495).

This sequence belongs to the class-I aminoacyl-tRNA synthetase family. In terms of assembly, monomer. Part of a multisubunit complex that groups tRNA ligases for Arg (RARS1), Asp (DARS1), Gln (QARS1), Ile (IARS1), Leu (LARS1), Lys (KARS1), Met (MARS1) the bifunctional ligase for Glu and Pro (EPRS1) and the auxiliary subunits AIMP1/p43, AIMP2/p38 and EEF1E1/p18. Interacts with RARS1. Part of a complex composed of RARS1, QARS1 and AIMP1.

It localises to the cytoplasm. The protein resides in the cytosol. It carries out the reaction tRNA(Gln) + L-glutamine + ATP = L-glutaminyl-tRNA(Gln) + AMP + diphosphate. Glutamine--tRNA ligase. Plays a critical role in brain development. In Mus musculus (Mouse), this protein is Glutamine--tRNA ligase (Qars1).